A 217-amino-acid polypeptide reads, in one-letter code: Large ribosomal subunit protein uL3 (217 aa).

The segment covering 134–146 has biased composition (polar residues); the sequence is GRATHGNSRSHNV. The disordered stretch occupies residues 134 to 154; sequence GRATHGNSRSHNVPGSIGMAQ. Gln-154 carries the N5-methylglutamine modification.

Belongs to the universal ribosomal protein uL3 family. In terms of assembly, part of the 50S ribosomal subunit. Forms a cluster with proteins L14 and L19. Post-translationally, methylated by PrmB.

In terms of biological role, one of the primary rRNA binding proteins, it binds directly near the 3'-end of the 23S rRNA, where it nucleates assembly of the 50S subunit. The sequence is that of Large ribosomal subunit protein uL3 from Burkholderia lata (strain ATCC 17760 / DSM 23089 / LMG 22485 / NCIMB 9086 / R18194 / 383).